We begin with the raw amino-acid sequence, 539 residues long: Acrosin-binding protein (539 aa).

Residues 1 to 25 (MRQLAAGSLLSLLKVLLLPLAPAPA) form the signal peptide. Residues 26–106 (QDANSASTPG…ASWFESFCQF (81 aa)) form a pro-ACR binding region. The propeptide at 26 to 269 (QDANSASTPG…NPFSFTPRVR (244 aa)) is removed in active form. Residues 186 to 259 (LGGQEQGQEH…PKFQSEFVSS (74 aa)) form a disordered region. Residues 192–211 (GQEHKQEHKQEQGQEHKQDE) show a composition bias toward basic and acidic residues. Over residues 212 to 238 (GQEQEEQEEEQEEEGKQEEGQGTEESL) the composition is skewed to acidic residues. The interval 315-423 (LPHVDALLVL…TQIGTLKSGR (109 aa)) is pro-ACR binding.

As to quaternary structure, binds specifically to the 55- and 53-kDa proacrosins and the 49-kDa acrosin intermediate, but is not capable of binding 43-kDa acrosin intermediate and 32-kDa mature acrosin. The N-terminus is blocked. Post-translationally, synthesized as a 60-kDa precursor, the 35-kDa mature form is post-translationally produced by the removal of the N-terminal half of the precursor during sperm maturation in the testis and/or epididymis. In terms of processing, phosphorylated on Tyr residues in capacitated sperm. In terms of tissue distribution, specifically expressed in testis.

It localises to the secreted. It is found in the cytoplasmic vesicle. Its subcellular location is the secretory vesicle. The protein localises to the acrosome. Its function is as follows. Acrosomal protein that maintains proacrosin (pro-ACR) as an enzymatically inactive zymogen in the acrosome. Involved also in the acrosome formation. In Sus scrofa (Pig), this protein is Acrosin-binding protein.